The following is a 942-amino-acid chain: Lambda-carrageenase (942 aa).

A signal peptide spans 1–25 (MKIKILSAMIASSLLIGCVIPTVKA).

As to quaternary structure, monomer.

The protein localises to the secreted. It catalyses the reaction Endohydrolysis of (1-&gt;4)-beta-linkages in the backbone of lambda-carrageenan, resulting in the tetrasaccharide alpha-D-Galp2,6S2-(1-&gt;3)-beta-D-Galp2S-(1-&gt;4)-alpha-D-Galp2,6S2-(1-&gt;3)-D-Galp2S.. In terms of biological role, hydrolyzes lambda-carrageenan with inversion of anomeric configuration. Does not hydrolyze iota- and kappa-carrageenans, agarose or porphyran. In Pseudoalteromonas sp, this protein is Lambda-carrageenase.